A 326-amino-acid chain; its full sequence is Putative HTH-type transcriptional regulatory protein MMP0678 (326 aa).

One can recognise an HTH cro/C1-type domain in the interval 128–183; that stretch reads LRETREKLKISVGELAEVSRVSRKTIYKYEQNEANPSAEVAIKIEEYLDVPLIKGI. The segment at residues 139-158 is a DNA-binding region (H-T-H motif); it reads VGELAEVSRVSRKTIYKYEQ.

The sequence is that of Putative HTH-type transcriptional regulatory protein MMP0678 from Methanococcus maripaludis (strain DSM 14266 / JCM 13030 / NBRC 101832 / S2 / LL).